The following is a 515-amino-acid chain: MVSIPEYYEGKNVLLTGATGFMGKVLLEKLLRSCPKVKAVYVLVRPKAGQTPEARIEEITSCKLFDRLREEQPDFKEKIIVITSELTQPELDLSNPVKEKLIECINIIFHCAATVRFNETLRDAVQLNVLSTKQLLSLAQQMTNLEVFMHVSTAYAYCNRKHIEEVVYPPPVDPKKLMDSLEWMDDSLVNDITPKLIGDRPNTYTYTKALAEYVVQQEGARLNTAIIRPSIVGASWKEPFPGWIDNFNGPSGLFIAAGKGILRTMRASNGAVADLVPVDVVVNMTLAAAWYSGVNRPRNIMVYNCTTGGTNPFHWSEVEYHVISTFKRNPLEQAFRRPNVNLTSNHLLYHYWIAVSHKAPAFLYDIYLRITGRSPRMMKTITRLHKAMVFLEYFTSNSWIWNTENMTMLMNQLSPEDKKTFNFDVRQLHWAEYMENYCMGTKKYVLNEEMSGLPAARKHLNKLRNIRYGFNTILVILIWRIFIARSQMARNIWYFVVSLCYKFLSYFRASSTMRY.

Residues 1-465 (MVSIPEYYEG…ARKHLNKLRN (465 aa)) lie on the Cytoplasmic side of the membrane. The helical transmembrane segment at 466-483 (IRYGFNTILVILIWRIFI) threads the bilayer. Residues 484–515 (ARSQMARNIWYFVVSLCYKFLSYFRASSTMRY) are Peroxisomal-facing.

Belongs to the fatty acyl-CoA reductase family.

Its subcellular location is the peroxisome membrane. It catalyses the reaction a long-chain fatty acyl-CoA + 2 NADPH + 2 H(+) = a long-chain primary fatty alcohol + 2 NADP(+) + CoA. It carries out the reaction hexadecanoyl-CoA + 2 NADPH + 2 H(+) = hexadecan-1-ol + 2 NADP(+) + CoA. The catalysed reaction is octadecanoyl-CoA + 2 NADPH + 2 H(+) = octadecan-1-ol + 2 NADP(+) + CoA. The enzyme catalyses (9Z)-octadecenoyl-CoA + 2 NADPH + 2 H(+) = (9Z)-octadecen-1-ol + 2 NADP(+) + CoA. It catalyses the reaction (9Z,12Z)-octadecadienoyl-CoA + 2 NADPH + 2 H(+) = (9Z,12Z)-octadecadien-1-ol + 2 NADP(+) + CoA. It carries out the reaction eicosanoyl-CoA + 2 NADPH + 2 H(+) = eicosan-1-ol + 2 NADP(+) + CoA. The catalysed reaction is 16-methylheptadecanoyl-CoA + 2 NADPH + 2 H(+) = 16-methylheptadecan-1-ol + 2 NADP(+) + CoA. The enzyme catalyses 18-methylnonadecanoyl-CoA + 2 NADPH + 2 H(+) = 18-methylnonadecan-1-ol + 2 NADP(+) + CoA. Functionally, catalyzes the reduction of saturated and unsaturated C16 or C18 fatty acyl-CoA to fatty alcohols. It plays an essential role in the production of ether lipids/plasmalogens which synthesis requires fatty alcohols. In parallel, it is also required for wax monoesters production since fatty alcohols also constitute a substrate for their synthesis. The protein is Fatty acyl-CoA reductase 1 of Gallus gallus (Chicken).